A 241-amino-acid polypeptide reads, in one-letter code: Small ribosomal subunit protein eS4 (241 aa).

The region spanning 37–100 (LPIVVWARDQ…GKHYRILRDK (64 aa)) is the S4 RNA-binding domain.

Belongs to the eukaryotic ribosomal protein eS4 family.

The polypeptide is Small ribosomal subunit protein eS4 (Methanospirillum hungatei JF-1 (strain ATCC 27890 / DSM 864 / NBRC 100397 / JF-1)).